The primary structure comprises 203 residues: Secreted RxLR effector protein RXLR-C28 (203 aa).

An N-terminal signal peptide occupies residues 1–24; the sequence is MKAVKLTAAVVVLFMAPYVPITSS. N-linked (GlcNAc...) asparagine glycosylation occurs at asparagine 32. The RxLR motif lies at 37-40; that stretch reads RHLR. N-linked (GlcNAc...) asparagine glycosylation occurs at asparagine 193.

This sequence belongs to the RxLR effector family.

It is found in the secreted. It localises to the host cytoplasm. Functionally, secreted effector that does not suppress pattern-triggered immunity (PTI) in plant host. The protein is Secreted RxLR effector protein RXLR-C28 of Plasmopara halstedii (Downy mildew of sunflower).